A 526-amino-acid chain; its full sequence is MVKRADAGAIVAQLRVAIAPDDIAITLHHKLCHAARQLLEQTLPAIKHGNILEIAQRENEATCFGRRTPDDSFLEWHKPASVLHNMVRAVADPWPSAFSYVGNQKFTVWSSRVHPHASKAQPGSVISIAPLLIACGDGALEIVTGQAGDGITMQGSQLAQTLGLVQGSRLNSQPACTARRRTRVLILGVNGFIGNHLTERLLREDHYEVYGLDIGSDAISRFLNHPHFHFVEGDISIHSEWIEYHVKKCDVVLPLVAIATPIEYTRNPLRVFELDFEENLRIIRYCVKYRKRIIFPSTSEVYGMCSDKYFDEDHSNLIVGPVNKPRWIYSVSKQLLDRVIWAYGEKEGLQFTLFRPFNWMGPRLDNLNAARIGSSRAITQLILNLVEGSPIKLIDGGKQKRCFTDIRDGIEALYRIIENAGNRCDGEIINIGNPENEASIEELGKMLLASFEKHPLRHHFPPFAGFRVVESSSYYGKGYQDVEHRKPSIRNAHRCLDWEPKIDMQETIDETLDFFLRTVDLTDKPS.

The tract at residues 1–170 (MVKRADAGAI…TLGLVQGSRL (170 aa)) is formyltransferase ArnAFT. A (6R)-10-formyltetrahydrofolate-binding site is contributed by 2-6 (VKRAD). The segment at 180–526 (RRTRVLILGV…RTVDLTDKPS (347 aa)) is dehydrogenase ArnADH. NAD(+)-binding positions include Asp213 and 234 to 235 (DI). UDP-alpha-D-glucuronate-binding positions include Ala259, Tyr264, and 298 to 299 (TS). Glu300 acts as the Proton acceptor; for decarboxylase activity in catalysis. Residues Arg326, Asn358, 392–401 (KLIDGGKQKR), and Tyr479 contribute to the UDP-alpha-D-glucuronate site. The active-site Proton donor; for decarboxylase activity is Arg485.

The protein in the N-terminal section; belongs to the Fmt family. UDP-L-Ara4N formyltransferase subfamily. In the C-terminal section; belongs to the NAD(P)-dependent epimerase/dehydratase family. UDP-glucuronic acid decarboxylase subfamily. In terms of assembly, homohexamer, formed by a dimer of trimers.

The enzyme catalyses UDP-alpha-D-glucuronate + NAD(+) = UDP-beta-L-threo-pentopyranos-4-ulose + CO2 + NADH. The catalysed reaction is UDP-4-amino-4-deoxy-beta-L-arabinose + (6R)-10-formyltetrahydrofolate = UDP-4-deoxy-4-formamido-beta-L-arabinose + (6S)-5,6,7,8-tetrahydrofolate + H(+). The protein operates within nucleotide-sugar biosynthesis; UDP-4-deoxy-4-formamido-beta-L-arabinose biosynthesis; UDP-4-deoxy-4-formamido-beta-L-arabinose from UDP-alpha-D-glucuronate: step 1/3. It participates in nucleotide-sugar biosynthesis; UDP-4-deoxy-4-formamido-beta-L-arabinose biosynthesis; UDP-4-deoxy-4-formamido-beta-L-arabinose from UDP-alpha-D-glucuronate: step 3/3. It functions in the pathway bacterial outer membrane biogenesis; lipopolysaccharide biosynthesis. Its function is as follows. Bifunctional enzyme that catalyzes the oxidative decarboxylation of UDP-glucuronic acid (UDP-GlcUA) to UDP-4-keto-arabinose (UDP-Ara4O) and the addition of a formyl group to UDP-4-amino-4-deoxy-L-arabinose (UDP-L-Ara4N) to form UDP-L-4-formamido-arabinose (UDP-L-Ara4FN). The modified arabinose is attached to lipid A and is required for resistance to polymyxin and cationic antimicrobial peptides. The chain is Putative bifunctional polymyxin resistance protein ArnA (arnA) from Shigella boydii serotype 18 (strain CDC 3083-94 / BS512).